We begin with the raw amino-acid sequence, 486 residues long: Sensor protein PhoQ (486 aa).

Over 1 to 16 (MKKLLRLFFPLSLRVR) the chain is Cytoplasmic. Residues 17–37 (FLLATAAVVLVLSLAYGMVAL) form a helical membrane-spanning segment. At 38–194 (IGYSVSFDKT…LKSSYMVWSW (157 aa)) the chain is on the periplasmic side. 2 residues coordinate a divalent metal cation: Asp151 and Asp152. The chain crosses the membrane as a helical span at residues 195 to 215 (FIYVLSANLLLVIPLLWVAAW). An HAMP domain is found at 215–266 (WWSLRPIEALAKEVRELEEHNRELLNPATTRELTSLVRNLNRLLKSERERYD). Topologically, residues 216-486 (WSLRPIEALA…GRQHSAPKDE (271 aa)) are cytoplasmic. The 207-residue stretch at 274 to 480 (DLTHSLKTPL…RMEVIFGRQH (207 aa)) folds into the Histidine kinase domain. The residue at position 277 (His277) is a Phosphohistidine; by autocatalysis. Position 385 (Asn385) interacts with Mg(2+). ATP is bound by residues 385 to 393 (NVLDNACKY), 415 to 420 (DDGPGI), and 434 to 446 (RVDT…GVGL). Gln442 serves as a coordination point for Mg(2+).

In terms of assembly, homodimer; probably dimerizes via the cytoplasmic domain. Probably interacts with MgrB in the periplasm, altering its activity and that of downstream effector PhoP.

Its subcellular location is the cell inner membrane. The catalysed reaction is ATP + protein L-histidine = ADP + protein N-phospho-L-histidine.. Its activity is regulated as follows. Acetyl-CoA acts as a non-competitive inhibitor of the PhoQ autokinase activity. Feedback inhibited by MgrB, which seems to bind PhoQ, altering its activity and that of downstream effector PhoP. Member of the two-component regulatory system PhoP/PhoQ involved in adaptation to low Mg(2+) environments and the control of acid resistance genes. In low periplasmic Mg(2+), PhoQ functions as a membrane-associated protein kinase that undergoes autophosphorylation and subsequently transfers the phosphate to PhoP, resulting in the expression of PhoP-activated genes (PAG) and repression of PhoP-repressed genes (PRG). In high periplasmic Mg(2+), acts as a protein phosphatase that dephosphorylates phospho-PhoP, resulting in the repression of PAG and may lead to expression of some PRG. PhoP-regulated transcription is redox-sensitive, being activated when the periplasm becomes more reducing (deletion of dsbA/dsbB, or treatment with dithiothreitol). MgrB acts between DsbA/DsbB and PhoP/PhoQ in this pathway; the 2 periplasmic Cys residues of MgrB are required for its action on PhoQ, which then acts on PhoP. Mediates magnesium influx to the cytosol by activation of mgtA. Promotes expression of the two-component regulatory system rstA/rstB and transcription of the hemL, mgrB, nagA, slyB, vboR and yrbL genes. The polypeptide is Sensor protein PhoQ (phoQ) (Escherichia coli (strain K12)).